We begin with the raw amino-acid sequence, 309 residues long: Homoserine kinase (309 aa).

Position 91–101 (91–101 (PIGSGLGSSAC)) interacts with ATP.

It belongs to the GHMP kinase family. Homoserine kinase subfamily.

The protein localises to the cytoplasm. The catalysed reaction is L-homoserine + ATP = O-phospho-L-homoserine + ADP + H(+). It functions in the pathway amino-acid biosynthesis; L-threonine biosynthesis; L-threonine from L-aspartate: step 4/5. Functionally, catalyzes the ATP-dependent phosphorylation of L-homoserine to L-homoserine phosphate. The sequence is that of Homoserine kinase from Pectobacterium carotovorum subsp. carotovorum (strain PC1).